The sequence spans 431 residues: Trigger factor (431 aa).

The PPIase FKBP-type domain maps to 158–243 (GYLVALETWS…VIEVSEPVLL (86 aa)).

It belongs to the FKBP-type PPIase family. Tig subfamily.

The protein localises to the cytoplasm. It carries out the reaction [protein]-peptidylproline (omega=180) = [protein]-peptidylproline (omega=0). Involved in protein export. Acts as a chaperone by maintaining the newly synthesized protein in an open conformation. Functions as a peptidyl-prolyl cis-trans isomerase. The sequence is that of Trigger factor from Xylella fastidiosa (strain M23).